The following is a 291-amino-acid chain: Taste receptor type 2 member 16 (291 aa).

A topological domain (extracellular) is located at residue M1. Residues 2 to 22 (IPIQLTVFFMIIYVLESLTII) form a helical membrane-spanning segment. Over 23-41 (VQSSLIVAVLGREWLQVRR) the chain is Cytoplasmic. Residues 42-62 (LMPVDMILISLGISRFCLQWA) form a helical membrane-spanning segment. Residues 63–84 (SMLNNFCSYLNLNYVLCNLTIT) lie on the Extracellular side of the membrane. N-linked (GlcNAc...) asparagine glycosylation is present at N80. The chain crosses the membrane as a helical span at residues 85 to 105 (WEFFNILTFWLNSLLTVFYCI). At 106–125 (KVSSFTHHIFLWVRWRILRW) the chain is on the cytoplasmic side. Residues 126-146 (FPWILLGSLTIACVTIIPSAI) form a helical membrane-spanning segment. At 147-182 (GNYIQIQLLTMEHLPRNSTVTDRLEKFHQYQFQSHT) the chain is on the extracellular side. N-linked (GlcNAc...) asparagine glycosylation is present at N163. Residues 183 to 203 (VALVIPFILFLASTILLMASL) form a helical membrane-spanning segment. Over 204 to 228 (TKQIQHHSTGHCNPSMKAHFTALRS) the chain is Cytoplasmic. Residues 229–249 (LAILFIVFTSYFLIILITIIG) form a helical membrane-spanning segment. The Extracellular segment spans residues 250 to 257 (TLFDKRCW). The chain crosses the membrane as a helical span at residues 258-278 (LWVWEAFVYAFILMHSTSLML). At 279-291 (SSPTLKRILKGKC) the chain is on the cytoplasmic side.

It belongs to the G-protein coupled receptor T2R family. In terms of assembly, interacts with RTP3 and RTP4.

It localises to the cell membrane. In terms of biological role, receptor that may play a role in the perception of bitterness and is gustducin-linked. May function as a bitter taste receptor for the phytonutrient beta glucopyranosides, some of which are toxic and some of which lower the risk of cancer and cardiovascular disease. The activity of this receptor may stimulate alpha gustducin, mediate PLC-beta-2 activation and lead to the gating of TRPM5. The protein is Taste receptor type 2 member 16 (TAS2R16) of Pongo pygmaeus (Bornean orangutan).